We begin with the raw amino-acid sequence, 347 residues long: uncharacterized protein (347 aa).

This is an uncharacterized protein from Sinorhizobium fredii (strain NBRC 101917 / NGR234).